The chain runs to 276 residues: 5'-nucleotidase SurE (276 aa).

Residues Asp14, Asp15, Ser46, and Asn104 each contribute to the a divalent metal cation site.

Belongs to the SurE nucleotidase family. A divalent metal cation is required as a cofactor.

It is found in the cytoplasm. The catalysed reaction is a ribonucleoside 5'-phosphate + H2O = a ribonucleoside + phosphate. Nucleotidase that shows phosphatase activity on nucleoside 5'-monophosphates. The protein is 5'-nucleotidase SurE of Crocosphaera subtropica (strain ATCC 51142 / BH68) (Cyanothece sp. (strain ATCC 51142)).